The primary structure comprises 116 residues: MEERIYLSMLLSTYGSLLTEKQVNVMRLYYDDDLSMPEIAELNNTTRQAIHDLIKRCHKMLLNYENKLKLVEKYKRNEDIKKDIKDKLYILKDKIQDKDNVQLIDEIEKDINSFSI.

Belongs to the UPF0122 family.

In terms of biological role, might take part in the signal recognition particle (SRP) pathway. This is inferred from the conservation of its genetic proximity to ftsY/ffh. May be a regulatory protein. This Clostridium acetobutylicum (strain ATCC 824 / DSM 792 / JCM 1419 / IAM 19013 / LMG 5710 / NBRC 13948 / NRRL B-527 / VKM B-1787 / 2291 / W) protein is UPF0122 protein CA_C1753.